A 694-amino-acid chain; its full sequence is Elongation factor G (694 aa).

Positions 8–287 (EDYRNFGIMA…AVVEFLPAPT (280 aa)) constitute a tr-type G domain. GTP is bound by residues 17 to 24 (AHIDAGKT), 86 to 90 (DTPGH), and 140 to 143 (NKMD).

This sequence belongs to the TRAFAC class translation factor GTPase superfamily. Classic translation factor GTPase family. EF-G/EF-2 subfamily.

Its subcellular location is the cytoplasm. Functionally, catalyzes the GTP-dependent ribosomal translocation step during translation elongation. During this step, the ribosome changes from the pre-translocational (PRE) to the post-translocational (POST) state as the newly formed A-site-bound peptidyl-tRNA and P-site-bound deacylated tRNA move to the P and E sites, respectively. Catalyzes the coordinated movement of the two tRNA molecules, the mRNA and conformational changes in the ribosome. The protein is Elongation factor G of Brucella canis (strain ATCC 23365 / NCTC 10854 / RM-666).